The primary structure comprises 129 residues: Large ribosomal subunit protein uL22 (129 aa).

The protein belongs to the universal ribosomal protein uL22 family. As to quaternary structure, part of the 50S ribosomal subunit.

This protein binds specifically to 23S rRNA; its binding is stimulated by other ribosomal proteins, e.g. L4, L17, and L20. It is important during the early stages of 50S assembly. It makes multiple contacts with different domains of the 23S rRNA in the assembled 50S subunit and ribosome. Its function is as follows. The globular domain of the protein is located near the polypeptide exit tunnel on the outside of the subunit, while an extended beta-hairpin is found that lines the wall of the exit tunnel in the center of the 70S ribosome. The sequence is that of Large ribosomal subunit protein uL22 from Phytoplasma sp. (strain STRAWB2).